The sequence spans 279 residues: DegV domain-containing protein SA1258 (279 aa).

Residues 4–278 form the DegV domain; the sequence is QIIVTDSTSD…QGAIGLVVLK (275 aa). Positions 61 and 93 each coordinate hexadecanoate.

Functionally, may bind long-chain fatty acids, such as palmitate, and may play a role in lipid transport or fatty acid metabolism. The chain is DegV domain-containing protein SA1258 from Staphylococcus aureus (strain N315).